The sequence spans 104 residues: Large ribosomal subunit protein bL21 (104 aa).

The protein belongs to the bacterial ribosomal protein bL21 family. Part of the 50S ribosomal subunit. Contacts protein L20.

Functionally, this protein binds to 23S rRNA in the presence of protein L20. The chain is Large ribosomal subunit protein bL21 from Streptococcus sanguinis (strain SK36).